The sequence spans 240 residues: MNAEKSPVNHNVDHEEIAKFEAVASRWWDLEGEFKPLHRINPLRLGYIAERAGGLFGKKVLDVGCGGGILAESMAREGATVTGLDMGFEPLQVAKLHALESGIQVDYVQETVEEHAAKHAGQYDVVTCMEMLEHVPDPQSVVRACAQLVKPGGDVFFSTLNRNGKSWLMAVVGAEYILRMVPKGTHDVKKFIKPAELLGWVDQTSLKERHMTGLHYNPITNSFKLGPGVDVNYMLHTQNK.

R44, G64, D85, and M129 together coordinate S-adenosyl-L-methionine.

This sequence belongs to the methyltransferase superfamily. UbiG/COQ3 family.

The enzyme catalyses a 3-demethylubiquinol + S-adenosyl-L-methionine = a ubiquinol + S-adenosyl-L-homocysteine + H(+). It carries out the reaction a 3-(all-trans-polyprenyl)benzene-1,2-diol + S-adenosyl-L-methionine = a 2-methoxy-6-(all-trans-polyprenyl)phenol + S-adenosyl-L-homocysteine + H(+). The protein operates within cofactor biosynthesis; ubiquinone biosynthesis. In terms of biological role, O-methyltransferase that catalyzes the 2 O-methylation steps in the ubiquinone biosynthetic pathway. The chain is Ubiquinone biosynthesis O-methyltransferase from Escherichia coli (strain UTI89 / UPEC).